We begin with the raw amino-acid sequence, 606 residues long: Leucine-rich repeat and immunoglobulin-like domain-containing nogo receptor-interacting protein 2 (606 aa).

Positions 1 to 27 (MLHTAIPCWQPFLGLAVVLLLMGSTIG) are cleaved as a signal peptide. Positions 28 to 57 (CPARCECSAQNKSVSCHRRRLLAIPEGIPI) constitute an LRRNT domain. Residues 28–545 (CPARCECSAQ…LDLKTILVST (518 aa)) lie on the Extracellular side of the membrane. An N-linked (GlcNAc...) asparagine glycan is attached at asparagine 38. 12 LRR repeats span residues 58–79 (ETKI…EFIS), 82–103 (LLEE…AFNN), 106–127 (NLRS…VFTG), 130–151 (NLTK…MFQD), 154–175 (NLKS…AFSG), 178–199 (SLEQ…ALSH), 202–223 (SLIA…AFKR), 226–247 (HLKN…NSLY), 250–271 (NLTS…AFKH), 274–295 (YLTH…MFSD), 298–319 (RLQE…SFQG), and 322–343 (FLRV…VFSS). N-linked (GlcNAc...) asparagine glycosylation occurs at asparagine 130. The N-linked (GlcNAc...) asparagine glycan is linked to asparagine 188. N-linked (GlcNAc...) asparagine glycosylation is found at asparagine 250, asparagine 260, and asparagine 279. A glycan (N-linked (GlcNAc...) asparagine) is linked at asparagine 327. The 55-residue stretch at 355 to 409 (NPLACDCRLLWLLQRQPNLQFGGQQPMCAGPDTIRERSFKDFHSTALSFYFTCKK) folds into the LRRCT domain. A disulfide bridge links cysteine 432 with cysteine 483. N-linked (GlcNAc...) asparagine glycosylation is found at asparagine 491, asparagine 522, and asparagine 527. A helical transmembrane segment spans residues 546-566 (AMGCFTFLGVVLFCFLLLFVW). Residues 567–606 (SRGKGKHKNSIDLEYVPRKNNGAVVEGEVAGPRRFNMKMI) are Cytoplasmic-facing.

It localises to the membrane. The sequence is that of Leucine-rich repeat and immunoglobulin-like domain-containing nogo receptor-interacting protein 2 (Lingo2) from Mus musculus (Mouse).